The following is a 280-amino-acid chain: Ribulose-phosphate 3-epimerase, chloroplastic (280 aa).

A chloroplast-targeting transit peptide spans 1–45 (SLGSSTLLQSQISGFGGSQKLQKISFSNPNSLTFTRRRIQTVVNA). Ser62 serves as a coordination point for substrate. A divalent metal cation contacts are provided by His87, Asp89, and His120. Asp89 acts as the Proton acceptor in catalysis. Substrate-binding positions include His120, 198-201 (GFGG), 231-233 (DGG), and 253-254 (GS). A divalent metal cation is bound at residue Asp231. The active-site Proton donor is Asp231.

The protein belongs to the ribulose-phosphate 3-epimerase family. As to quaternary structure, homohexamer. It depends on Co(2+) as a cofactor. Fe(2+) is required as a cofactor. The cofactor is Mn(2+). Zn(2+) serves as cofactor. As to expression, highest level of expression in leaves, whereas it is low in roots, tubers, and stems.

It localises to the plastid. It is found in the chloroplast thylakoid membrane. It carries out the reaction D-ribulose 5-phosphate = D-xylulose 5-phosphate. The protein operates within carbohydrate biosynthesis; Calvin cycle. Catalyzes the reversible epimerization of D-ribulose 5-phosphate to D-xylulose 5-phosphate. This Solanum tuberosum (Potato) protein is Ribulose-phosphate 3-epimerase, chloroplastic.